The following is a 208-amino-acid chain: Large ribosomal subunit protein uL3 (208 aa).

The disordered stretch occupies residues 116–148 (GFQGVIKRHGQSRGPMAHGSRYHRRPGSMGPVA).

The protein belongs to the universal ribosomal protein uL3 family. As to quaternary structure, part of the 50S ribosomal subunit. Forms a cluster with proteins L14 and L19.

In terms of biological role, one of the primary rRNA binding proteins, it binds directly near the 3'-end of the 23S rRNA, where it nucleates assembly of the 50S subunit. This chain is Large ribosomal subunit protein uL3, found in Streptococcus pyogenes serotype M5 (strain Manfredo).